Reading from the N-terminus, the 301-residue chain is Pantothenate synthetase (301 aa).

30 to 37 is a binding site for ATP; it reads MGNLHEGH. The Proton donor role is filled by histidine 37. Residue glutamine 61 coordinates (R)-pantoate. Glutamine 61 lines the beta-alanine pocket. Residue 149–152 coordinates ATP; the sequence is GEKD. (R)-pantoate is bound at residue glutamine 155. ATP contacts are provided by residues valine 178 and 186–189; that span reads MSSR.

Belongs to the pantothenate synthetase family. Homodimer.

The protein resides in the cytoplasm. The catalysed reaction is (R)-pantoate + beta-alanine + ATP = (R)-pantothenate + AMP + diphosphate + H(+). The protein operates within cofactor biosynthesis; (R)-pantothenate biosynthesis; (R)-pantothenate from (R)-pantoate and beta-alanine: step 1/1. Functionally, catalyzes the condensation of pantoate with beta-alanine in an ATP-dependent reaction via a pantoyl-adenylate intermediate. The sequence is that of Pantothenate synthetase from Vibrio parahaemolyticus serotype O3:K6 (strain RIMD 2210633).